We begin with the raw amino-acid sequence, 282 residues long: Aldo-keto reductase BQ2027_MB2996 (282 aa).

Tyrosine 57 serves as the catalytic Proton donor. Positions 197, 235, 237, 238, 239, 243, 246, 247, and 273 each coordinate NADPH.

The protein belongs to the aldo/keto reductase family.

This is Aldo-keto reductase BQ2027_MB2996 from Mycobacterium bovis (strain ATCC BAA-935 / AF2122/97).